Here is a 552-residue protein sequence, read N- to C-terminus: CTP synthase (552 aa).

The segment at 1–267 is amidoligase domain; the sequence is MAKFIFVTGG…AEQTLKLLRM (267 aa). Residue Ser13 coordinates CTP. Ser13 is a binding site for UTP. ATP contacts are provided by residues 14–19 and Asp71; that span reads SIGKGI. Mg(2+) contacts are provided by Asp71 and Glu141. Residues 148-150, 188-193, and Lys224 each bind CTP; these read DIE and KTKPTQ. UTP-binding positions include 188-193 and Lys224; that span reads KTKPTQ. The region spanning 292 to 534 is the Glutamine amidotransferase type-1 domain; sequence DIAIVGKYVQ…IQAAGNHKSQ (243 aa). Gly354 is an L-glutamine binding site. The Nucleophile; for glutamine hydrolysis role is filled by Cys381. Residues 382–385, Glu405, and Arg462 each bind L-glutamine; that span reads LGMQ. Residues His507 and Glu509 contribute to the active site. Residues 533 to 552 form a disordered region; the sequence is SQPISDELDNQSTEMSISLS.

Belongs to the CTP synthase family. In terms of assembly, homotetramer.

The catalysed reaction is UTP + L-glutamine + ATP + H2O = CTP + L-glutamate + ADP + phosphate + 2 H(+). It carries out the reaction L-glutamine + H2O = L-glutamate + NH4(+). The enzyme catalyses UTP + NH4(+) + ATP = CTP + ADP + phosphate + 2 H(+). It participates in pyrimidine metabolism; CTP biosynthesis via de novo pathway; CTP from UDP: step 2/2. With respect to regulation, allosterically activated by GTP, when glutamine is the substrate; GTP has no effect on the reaction when ammonia is the substrate. The allosteric effector GTP functions by stabilizing the protein conformation that binds the tetrahedral intermediate(s) formed during glutamine hydrolysis. Inhibited by the product CTP, via allosteric rather than competitive inhibition. In terms of biological role, catalyzes the ATP-dependent amination of UTP to CTP with either L-glutamine or ammonia as the source of nitrogen. Regulates intracellular CTP levels through interactions with the four ribonucleotide triphosphates. The polypeptide is CTP synthase (Picosynechococcus sp. (strain ATCC 27264 / PCC 7002 / PR-6) (Agmenellum quadruplicatum)).